We begin with the raw amino-acid sequence, 1129 residues long: A-kinase anchor protein 11 (1129 aa).

Over residues 1 to 12 the composition is skewed to basic residues; the sequence is MQKMQCHLRRPL. Residues 1–21 form a disordered region; that stretch reads MQKMQCHLRRPLHSSSSFSSQ. Phosphothreonine occurs at positions 251 and 363. 3 disordered regions span residues 354–376, 394–416, and 434–455; these read IRDR…QTSS, EFAP…SENE, and SEEV…SEHS. Over residues 404–416 the composition is skewed to polar residues; sequence PHNSSVGSLSENE. Residues Ser434, Ser439, and Ser440 each carry the phosphoserine modification. A compositionally biased stretch (basic and acidic residues) spans 442 to 455; the sequence is GEEHPEMDVKSEHS. Ser595 is subject to Phosphoserine. Thr742 is modified (phosphothreonine). Position 835 is a phosphoserine (Ser835). Residues 905 to 918 are PKA-RII binding region; it reads LAEKIVAEAIEKAE. Positions 962–1061 are disordered; that stretch reads SKEVEDFQST…QEDGAEGLQP (100 aa). Polar residues predominate over residues 968–995; it reads FQSTESLGSQQMNLSVGEDSTGSWSNLS. Residues 1002 to 1011 are compositionally biased toward basic and acidic residues; it reads DESSSFHHLS. Residues 1012-1028 show a composition bias toward low complexity; it reads ESSNGNSSSWSSLGLEG. Residues 1033–1042 are compositionally biased toward polar residues; it reads NNLSFPTSDS. The segment covering 1043-1056 has biased composition (acidic residues); the sequence is DGPDDRESEQEDGA.

In terms of tissue distribution, expressed in brain and testis.

Its subcellular location is the peroxisome. Its function is as follows. Binds to type II regulatory subunits of protein kinase A and anchors/targets them. This is A-kinase anchor protein 11 (Akap11) from Rattus norvegicus (Rat).